The sequence spans 205 residues: Ribosomal RNA small subunit methyltransferase G (205 aa).

S-adenosyl-L-methionine contacts are provided by residues G73, L78, 124–125, and R138; that span reads VE.

This sequence belongs to the methyltransferase superfamily. RNA methyltransferase RsmG family.

It is found in the cytoplasm. It catalyses the reaction guanosine(527) in 16S rRNA + S-adenosyl-L-methionine = N(7)-methylguanosine(527) in 16S rRNA + S-adenosyl-L-homocysteine. In terms of biological role, specifically methylates the N7 position of guanine in position 527 of 16S rRNA. This Actinobacillus pleuropneumoniae serotype 5b (strain L20) protein is Ribosomal RNA small subunit methyltransferase G.